The chain runs to 391 residues: Origin recognition complex subunit 2 (391 aa).

The tract at residues Met-1 to Lys-43 is disordered. Residues Phe-22–Ser-38 show a composition bias toward polar residues.

It belongs to the ORC2 family. As to quaternary structure, ORC is composed of six subunits.

It is found in the nucleus. Component of the origin recognition complex (ORC) that binds origins of replication. DNA-binding is ATP-dependent, however specific DNA sequences that define origins of replication have not been identified so far. ORC is required to assemble the pre-replication complex necessary to initiate DNA replication. This chain is Origin recognition complex subunit 2 (orcB), found in Dictyostelium discoideum (Social amoeba).